The primary structure comprises 137 residues: Putative pre-16S rRNA nuclease (137 aa).

Belongs to the YqgF nuclease family.

It is found in the cytoplasm. In terms of biological role, could be a nuclease involved in processing of the 5'-end of pre-16S rRNA. In Anaeromyxobacter sp. (strain Fw109-5), this protein is Putative pre-16S rRNA nuclease.